A 590-amino-acid chain; its full sequence is MNIGRLVWNEDDKAIVASLLGKRALDYLLSNSVSNANLLMTLGSDENLQNKLSDLVERPNASNFSWNYAIFWQISRSKAGDLVLCWGDGYCREPKEGEKSEIVRILSMGREEETHQTMRKRVLQKLHDLFGGSEEENCALGLDRVTDTEMFLLSSMYFSFPRGEGGPGKCFASAKPVWLSDVVNSGSDYCVRSFLAKSAGIQTVVLVPTDLGVVELGSTSCLPESEDSILSIRSLFTSSLPPVRAVALPVTVAEKIDDNRTKIFGKDLHNSGFLQHHQHHQQQQQQPPQQQQHRQFREKLTVRKMDDRAPKRLDAYPNNGNRFMFSNPGTNNNTLLSPTWVQPENYTRPINVKEVPSTDEFKFLPLQQSSQRLLPPAQMQIDFSAASSRASENNSDGEGGGEWADAVGADESGNNRPRKRGRRPANGRAEALNHVEAERQRREKLNQRFYALRSVVPNISKMDKASLLGDAVSYINELHAKLKVMEAERERLGYSSNPPISLDSDINVQTSGEDVTVRINCPLESHPASRIFHAFEESKVEVINSNLEVSQDTVLHTFVVKSEELTKEKLISALSREQTNSVQSRTSSGR.

2 disordered regions span residues 274–296 and 385–439; these read LQHH…HRQF and AASS…EAER. The span at 281 to 293 shows a compositional bias: low complexity; it reads QQQQQQPPQQQQH. The segment covering 416 to 425 has biased composition (basic residues); that stretch reads RPRKRGRRPA. In terms of domain architecture, bHLH spans 429-478; that stretch reads AEALNHVEAERQRREKLNQRFYALRSVVPNISKMDKASLLGDAVSYINEL.

As to quaternary structure, homodimer.

It is found in the nucleus. The polypeptide is Transcription factor bHLH13 (BHLH13) (Arabidopsis thaliana (Mouse-ear cress)).